Here is a 71-residue protein sequence, read N- to C-terminus: SRY-related protein LG28 (71 aa).

Positions 1–68 (VKRPMNAFMV…KHMADYPDYK (68 aa)) form a DNA-binding region, HMG box.

It is found in the nucleus. This Eublepharis macularius (Leopard gecko) protein is SRY-related protein LG28.